The following is a 147-amino-acid chain: Hemoglobin subunit beta-1 (147 aa).

Valine 2 is subject to N-acetylvaline. The Globin domain maps to 3 to 147 (HLTDAEKAAV…VATALAHKYH (145 aa)). Residue lysine 18 is modified to N6-succinyllysine. 3 positions are modified to phosphoserine: serine 21, serine 45, and serine 51. N6-succinyllysine is present on lysine 60. Heme b-binding residues include histidine 64 and histidine 93. Arginine 105 bears the Asymmetric dimethylarginine mark. Residue threonine 124 is modified to Phosphothreonine.

The protein belongs to the globin family. In terms of assembly, heterotetramer of two alpha chains and two beta chains. As to expression, red blood cells.

Involved in oxygen transport from the lung to the various peripheral tissues. The protein is Hemoglobin subunit beta-1 (Hbb-b1) of Mus musculus (Mouse).